Reading from the N-terminus, the 602-residue chain is Probable translation initiation factor IF-2 (602 aa).

Positions 15–230 (LRTPIVAVLG…VLMGLSQRYL (216 aa)) constitute a tr-type G domain. Residues 24-31 (GHVDHGKT) are G1. 24-31 (GHVDHGKT) is a GTP binding site. The segment at 49–53 (AITQH) is G2. The interval 86–89 (DTPG) is G3. Residues 86 to 90 (DTPGH) and 140 to 143 (NKID) contribute to the GTP site. Positions 140–143 (NKID) are G4. The tract at residues 208-210 (SAE) is G5.

Belongs to the TRAFAC class translation factor GTPase superfamily. Classic translation factor GTPase family. IF-2 subfamily.

Functionally, function in general translation initiation by promoting the binding of the formylmethionine-tRNA to ribosomes. Seems to function along with eIF-2. This Natronomonas pharaonis (strain ATCC 35678 / DSM 2160 / CIP 103997 / JCM 8858 / NBRC 14720 / NCIMB 2260 / Gabara) (Halobacterium pharaonis) protein is Probable translation initiation factor IF-2.